Reading from the N-terminus, the 279-residue chain is Probable endonuclease 4 (279 aa).

Residues H69, H109, E145, D179, H182, H216, D229, H231, and E261 each coordinate Zn(2+).

It belongs to the AP endonuclease 2 family. Zn(2+) is required as a cofactor.

The enzyme catalyses Endonucleolytic cleavage to 5'-phosphooligonucleotide end-products.. Endonuclease IV plays a role in DNA repair. It cleaves phosphodiester bonds at apurinic or apyrimidinic (AP) sites, generating a 3'-hydroxyl group and a 5'-terminal sugar phosphate. The protein is Probable endonuclease 4 of Desulforapulum autotrophicum (strain ATCC 43914 / DSM 3382 / VKM B-1955 / HRM2) (Desulfobacterium autotrophicum).